A 247-amino-acid chain; its full sequence is Large ribosomal subunit protein uL24m (247 aa).

Residues Phe-84–Glu-117 form the KOW domain.

The protein belongs to the universal ribosomal protein uL24 family. In terms of assembly, component of the mitochondrial ribosome large subunit (39S) which comprises a 16S rRNA and about 50 distinct proteins.

The protein resides in the mitochondrion. The protein is Large ribosomal subunit protein uL24m (mRpL24) of Drosophila pseudoobscura pseudoobscura (Fruit fly).